A 662-amino-acid polypeptide reads, in one-letter code: Retaining alpha-galactosidase (662 aa).

Residues 1–19 form the signal peptide; the sequence is MKKLTFLLLCVLCTLSLQA. Residue Glu174 participates in Ca(2+) binding. Asp415 (nucleophile) is an active-site residue. 2 residues coordinate Ca(2+): Glu464 and Glu470. Residue Glu470 is the Proton donor/acceptor of the active site.

It belongs to the glycosyl hydrolase 97 family. In terms of assembly, monomer. Ca(2+) serves as cofactor.

It catalyses the reaction Hydrolysis of terminal, non-reducing alpha-D-galactose residues in alpha-D-galactosides, including galactose oligosaccharides, galactomannans and galactolipids.. With respect to regulation, inhibited by EDTA in vitro. Functionally, galactosidase that is able to hydrolyze the alpha-1,6 disaccharide melibiose and the synthetic p-nitrophenyl alpha-galactoside substrate (pNP-Gal), with retention of the anomeric configuration. Does not hydrolyze DNP-Glc or pNP-Glc. The protein is Retaining alpha-galactosidase of Bacteroides thetaiotaomicron (strain ATCC 29148 / DSM 2079 / JCM 5827 / CCUG 10774 / NCTC 10582 / VPI-5482 / E50).